Consider the following 127-residue polypeptide: MRHRNSGRSFSRTSSHRKAMFSNMCCSLIEHELIRTTLPKAKDLRRYIEPLITVSKSDSVASRRRAFDILRSKSAVGKLFTDLGPRFAKRPGGYIRIIKCGYRDGDNAPMAIVELMDRPVSSDDTEE.

This sequence belongs to the bacterial ribosomal protein bL17 family. Part of the 50S ribosomal subunit. Contacts protein L32.

This Legionella pneumophila (strain Corby) protein is Large ribosomal subunit protein bL17.